Reading from the N-terminus, the 167-residue chain is Transcription antitermination protein NusB (167 aa).

Positions 1–32 (MSDTPETGKPAAGTKPAARTEAKAPPKSARRR) are disordered.

The protein belongs to the NusB family.

In terms of biological role, involved in transcription antitermination. Required for transcription of ribosomal RNA (rRNA) genes. Binds specifically to the boxA antiterminator sequence of the ribosomal RNA (rrn) operons. This Cupriavidus pinatubonensis (strain JMP 134 / LMG 1197) (Cupriavidus necator (strain JMP 134)) protein is Transcription antitermination protein NusB.